The sequence spans 689 residues: MAEELVLETCDLQCERNGREHRTEEMGSQQLVVRRGQPFTITLNFAGRGYEEGVDKLAFDVETGPCPVETSGTRSHFTLTDCPEEGTWSAVLQQQDGATLCVSLCSPSIARVGRYRLTLEASTGYQGSSFHLGDFVLLFNAWHPEDAVYLKEEDERREYVLSQQGLIYMGSRDYITSTPWNFGQFEDEILAICLEMLDINPKFLRDQNLDCSRRNDPVYIGRVVSAMVNCNDEDHGVLLGRWDNHYEDGMSPMAWIGSVDILKRWRRLGCQPVKYGQCWVFAAVACTVMRCLGVPSRVVTNYNSAHDTNGNLVIDRYLSETGMEERRSTDMIWNFHCWVECWMTRPDLAPGYDGWQALDPTPQEKSEGVYCCGPAPVKAIKEGDLQVQYDIPFVFAEVNADVVYWIVQSDGEKKKSTHSSVVGKNISTKSVGRDSREDITHTYKYPEGSEKEREVFSKAEHEKSSLGEQEEGLHMRIKLSEGANNGSDFDVFAFISNDTDKERECRLRLCARTASYNGEVGPQCGFKDLLNLSLQPHMEQSVPLRILYEQYGPNLTQDNMIKVVALLTEYETGDSVVAIRDVYIQNPEIKIRILGEPMQERKLVAEIRLVNPLAEPLNNCIFVVEGAGLTEGQRIEELEDPVEPQAEAKFRMEFVPRQAGLHKLMVDFESDKLTGVKGYRNVIIAPLPK.

Catalysis depends on residues cysteine 278, histidine 336, and aspartate 359. Residues asparagine 399, aspartate 401, glutamate 437, glutamate 447, and glutamate 452 each contribute to the Ca(2+) site. Residues 427 to 453 are disordered; the sequence is STKSVGRDSREDITHTYKYPEGSEKER. The span at 431 to 441 shows a compositional bias: basic and acidic residues; sequence VGRDSREDITH. 476–483 contacts GTP; the sequence is RIKLSEGA. Position 539 (glutamate 539) interacts with Ca(2+). Residue 580-583 participates in GTP binding; sequence RDVY.

It belongs to the transglutaminase superfamily. Transglutaminase family. In terms of assembly, monomer. Requires Ca(2+) as cofactor. As to expression, predominates in mature erythrocytes. Also found in kidney and cardiac muscle.

The protein resides in the cytoplasm. It localises to the cytosol. Its subcellular location is the nucleus. The protein localises to the chromosome. It is found in the secreted. The protein resides in the extracellular space. It localises to the extracellular matrix. Its subcellular location is the cell membrane. The protein localises to the mitochondrion. The enzyme catalyses L-glutaminyl-[protein] + L-lysyl-[protein] = [protein]-L-lysyl-N(6)-5-L-glutamyl-[protein] + NH4(+). It catalyses the reaction L-glutaminyl-[protein] + serotonin = 5-serotonyl-L-glutamyl-[protein] + NH4(+). It carries out the reaction L-glutaminyl-[protein] + dopamine = 5-dopaminyl-L-glutamyl-[protein] + NH4(+). The catalysed reaction is L-glutaminyl-[protein] + histamine = 5-histaminyl-L-glutamyl-[protein] + NH4(+). The enzyme catalyses L-glutaminyl-[protein] + (R)-noradrenaline = 5-(R)-noradrenalinyl-L-glutamyl-[protein] + NH4(+). It catalyses the reaction L-glutaminyl-[protein] + H2O = L-glutamyl-[protein] + NH4(+). With respect to regulation, acyltransferase activity is regulated by the binding of GTP and Ca(2+): inactivated by GTP, which stabilizes its closed structure, thereby obstructing the accessibility of substrates to the active sites. In contrast, Ca(2+) acts as a cofactor by inducing conformational change to the active open form. In absence of Ca(2+), Mg(2+) may bind Ca(2+)-binding sites, promoting GTP-binding and subsequent inhibition of the acyltransferase activity. Its function is as follows. Calcium-dependent acyltransferase that catalyzes the formation of covalent bonds between peptide-bound glutamine and various primary amines, such as gamma-amino group of peptide-bound lysine, or mono- and polyamines, thereby producing cross-linked or aminated proteins, respectively. Involved in many biological processes, such as bone development, angiogenesis, wound healing, cellular differentiation, chromatin modification and apoptosis. Acts as a protein-glutamine gamma-glutamyltransferase by mediating the cross-linking of proteins: under physiological conditions, the protein cross-linking activity is inhibited by GTP; inhibition is relieved by Ca(2+) in response to various stresses. When secreted, catalyzes cross-linking of proteins of the extracellular matrix, resulting in the formation of scaffolds. Plays a key role during apoptosis, both by (1) promoting the cross-linking of cytoskeletal proteins resulting in condensation of the cytoplasm, and by (2) mediating cross-linking proteins of the extracellular matrix, resulting in the irreversible formation of scaffolds that stabilize the integrity of the dying cells before their clearance by phagocytosis, thereby preventing the leakage of harmful intracellular components. In addition to protein cross-linking, can use different monoamine substrates to catalyze a vast array of protein post-translational modifications: mediates aminylation of serotonin, dopamine, noradrenaline or histamine into glutamine residues of target proteins to generate protein serotonylation, dopaminylation, noradrenalinylation or histaminylation, respectively. Mediates protein serotonylation of small GTPases during activation and aggregation of platelets, leading to constitutive activation of these GTPases. Plays a key role in chromatin organization by mediating serotonylation and dopaminylation of histone H3. Catalyzes serotonylation of 'Gln-5' of histone H3 (H3Q5ser) during serotonergic neuron differentiation, thereby facilitating transcription. Acts as a mediator of neurotransmission-independent role of nuclear dopamine in ventral tegmental area (VTA) neurons: catalyzes dopaminylation of 'Gln-5' of histone H3 (H3Q5dop), thereby regulating relapse-related transcriptional plasticity in the reward system. Also acts as a protein deamidase by mediating the side chain deamidation of specific glutamine residues of proteins to glutamate. May also act as an isopeptidase cleaving the previously formed cross-links. Also able to participate in signaling pathways independently of its acyltransferase activity: acts as a signal transducer in alpha-1 adrenergic receptor-mediated stimulation of phospholipase C-delta (PLCD) activity and is required for coupling alpha-1 adrenergic agonists to the stimulation of phosphoinositide lipid metabolism. The polypeptide is Protein-glutamine gamma-glutamyltransferase 2 (Gallus gallus (Chicken)).